A 407-amino-acid chain; its full sequence is uncharacterized protein (407 aa).

The protein belongs to the peptidase U32 family.

This is an uncharacterized protein from Methanocaldococcus jannaschii (strain ATCC 43067 / DSM 2661 / JAL-1 / JCM 10045 / NBRC 100440) (Methanococcus jannaschii).